The sequence spans 619 residues: TBC domain-containing protein C1952.17c (619 aa).

Positions 34–387 (PDEYSLRAKA…RLWDSIIADQ (354 aa)) constitute a Rab-GAP TBC domain.

It is found in the cytoplasm. In terms of biological role, may act as a GTPase-activating protein for Rab family protein(s). The chain is TBC domain-containing protein C1952.17c from Schizosaccharomyces pombe (strain 972 / ATCC 24843) (Fission yeast).